A 119-amino-acid chain; its full sequence is Probable prefoldin subunit 6 (119 aa).

It belongs to the prefoldin subunit beta family. Heterohexamer of two PFD-alpha type and four PFD-beta type subunits. May interact with MSP1.

Functionally, binds specifically to cytosolic chaperonin (c-CPN) and transfers target proteins to it. Binds to nascent polypeptide chain and promotes folding in an environment in which there are many competing pathways for nonnative proteins. The polypeptide is Probable prefoldin subunit 6 (Plasmodium falciparum (isolate 3D7)).